The chain runs to 391 residues: Formate-dependent phosphoribosylglycinamide formyltransferase (391 aa).

N(1)-(5-phospho-beta-D-ribosyl)glycinamide is bound by residues 18–19 and Glu-78; that span reads EL. ATP-binding positions include Arg-110, Lys-151, 156–161, 191–194, and Glu-199; these read SSGKGQ and EEFI. Positions 115–305 constitute an ATP-grasp domain; sequence DLASKDLKIK…EFELHLRAFL (191 aa). Mg(2+)-binding residues include Glu-264 and Glu-276. N(1)-(5-phospho-beta-D-ribosyl)glycinamide contacts are provided by residues Asp-283, Lys-353, and 360-361; that span reads RR.

Belongs to the PurK/PurT family. Homodimer.

The enzyme catalyses N(1)-(5-phospho-beta-D-ribosyl)glycinamide + formate + ATP = N(2)-formyl-N(1)-(5-phospho-beta-D-ribosyl)glycinamide + ADP + phosphate + H(+). The protein operates within purine metabolism; IMP biosynthesis via de novo pathway; N(2)-formyl-N(1)-(5-phospho-D-ribosyl)glycinamide from N(1)-(5-phospho-D-ribosyl)glycinamide (formate route): step 1/1. Involved in the de novo purine biosynthesis. Catalyzes the transfer of formate to 5-phospho-ribosyl-glycinamide (GAR), producing 5-phospho-ribosyl-N-formylglycinamide (FGAR). Formate is provided by PurU via hydrolysis of 10-formyl-tetrahydrofolate. The sequence is that of Formate-dependent phosphoribosylglycinamide formyltransferase from Prochlorococcus marinus (strain MIT 9301).